Reading from the N-terminus, the 124-residue chain is Small ribosomal subunit protein uS12 (124 aa).

A 3-methylthioaspartic acid modification is found at Asp-90.

This sequence belongs to the universal ribosomal protein uS12 family. Part of the 30S ribosomal subunit. Contacts proteins S8 and S17. May interact with IF1 in the 30S initiation complex.

Functionally, with S4 and S5 plays an important role in translational accuracy. Its function is as follows. Interacts with and stabilizes bases of the 16S rRNA that are involved in tRNA selection in the A site and with the mRNA backbone. Located at the interface of the 30S and 50S subunits, it traverses the body of the 30S subunit contacting proteins on the other side and probably holding the rRNA structure together. The combined cluster of proteins S8, S12 and S17 appears to hold together the shoulder and platform of the 30S subunit. The polypeptide is Small ribosomal subunit protein uS12 (Wolbachia pipientis subsp. Culex pipiens (strain wPip)).